The primary structure comprises 756 residues: Serine/threonine-protein kinase tousled-like 1-B (756 aa).

Low complexity-rich tracts occupy residues 1–12 (MSVQSNSNSSGS) and 23–34 (STGSPTPGSVSP). Disordered stretches follow at residues 1-56 (MSVQ…LDPR) and 69-185 (VSGN…QNSS). The segment covering 45 to 56 (EGMDELHSLDPR) has biased composition (basic and acidic residues). A compositionally biased stretch (gly residues) spans 72 to 85 (NTGGSTGSASGGPK). The span at 93 to 103 (SSHSFGSLGSS) shows a compositional bias: low complexity. Positions 104 to 120 (SDKESETPEKKHFESSR) are enriched in basic and acidic residues. A coiled-coil region spans residues 243–268 (DLRRQIDEQQKLLERFKERLNKCTTM). The tract at residues 339-375 (KLLAKRKPSSTPSSQSPTPNESKQRKTKAVNGADNDP) is disordered. Residues 347 to 357 (SSTPSSQSPTP) are compositionally biased toward low complexity. Positions 397 to 435 (FKLRLGHLKKEEAEIQAELERLERVRNLHIRELKRINNE) form a coiled coil. One can recognise a Protein kinase domain in the interval 450-728 (YLLLHLLGRG…VHQLGSDSYL (279 aa)). Residues 456 to 464 (LGRGGFSEV) and Lys479 contribute to the ATP site. Asp580 serves as the catalytic Proton acceptor. A disordered region spans residues 734 to 756 (RSNSSGNLQATPASPAPSGIISY). The segment covering 735-745 (SNSSGNLQATP) has biased composition (polar residues).

This sequence belongs to the protein kinase superfamily. Ser/Thr protein kinase family. It depends on Mg(2+) as a cofactor.

The protein resides in the nucleus. It carries out the reaction L-seryl-[protein] + ATP = O-phospho-L-seryl-[protein] + ADP + H(+). It catalyses the reaction L-threonyl-[protein] + ATP = O-phospho-L-threonyl-[protein] + ADP + H(+). In Danio rerio (Zebrafish), this protein is Serine/threonine-protein kinase tousled-like 1-B (tlk1b).